The chain runs to 342 residues: Farnesyl pyrophosphate synthase 2 (342 aa).

K48, R51, and Q86 together coordinate isopentenyl diphosphate. Mg(2+)-binding residues include D93 and D97. R102 is a binding site for dimethylallyl diphosphate. Position 103 (R103) interacts with isopentenyl diphosphate. Dimethylallyl diphosphate is bound by residues K190, T191, Q229, K246, and K255.

Belongs to the FPP/GGPP synthase family. Mg(2+) is required as a cofactor.

The protein resides in the cytoplasm. The catalysed reaction is isopentenyl diphosphate + dimethylallyl diphosphate = (2E)-geranyl diphosphate + diphosphate. It carries out the reaction isopentenyl diphosphate + (2E)-geranyl diphosphate = (2E,6E)-farnesyl diphosphate + diphosphate. Its pathway is isoprenoid biosynthesis; farnesyl diphosphate biosynthesis; farnesyl diphosphate from geranyl diphosphate and isopentenyl diphosphate: step 1/1. It participates in isoprenoid biosynthesis; geranyl diphosphate biosynthesis; geranyl diphosphate from dimethylallyl diphosphate and isopentenyl diphosphate: step 1/1. Functionally, catalyzes the sequential condensation of isopentenyl pyrophosphate with the allylic pyrophosphates, dimethylallyl pyrophosphate, and then with the resultant geranylpyrophosphate to the ultimate product farnesyl pyrophosphate. The polypeptide is Farnesyl pyrophosphate synthase 2 (FPS2) (Parthenium argentatum (Guayule rubber plant)).